A 544-amino-acid polypeptide reads, in one-letter code: Chaperonin GroEL (544 aa).

Residues Thr-29–Pro-32, Lys-50, Asp-86–Thr-90, Gly-414, Asp-477–Ala-479, and Asp-493 contribute to the ATP site.

This sequence belongs to the chaperonin (HSP60) family. In terms of assembly, forms a cylinder of 14 subunits composed of two heptameric rings stacked back-to-back. Interacts with the co-chaperonin GroES.

The protein localises to the cytoplasm. The enzyme catalyses ATP + H2O + a folded polypeptide = ADP + phosphate + an unfolded polypeptide.. In terms of biological role, together with its co-chaperonin GroES, plays an essential role in assisting protein folding. The GroEL-GroES system forms a nano-cage that allows encapsulation of the non-native substrate proteins and provides a physical environment optimized to promote and accelerate protein folding. This chain is Chaperonin GroEL, found in Hydrogenovibrio crunogenus (strain DSM 25203 / XCL-2) (Thiomicrospira crunogena).